The chain runs to 889 residues: Alanine--tRNA ligase (889 aa).

Positions 574, 578, 682, and 686 each coordinate Zn(2+).

Belongs to the class-II aminoacyl-tRNA synthetase family. Zn(2+) serves as cofactor.

It is found in the cytoplasm. It catalyses the reaction tRNA(Ala) + L-alanine + ATP = L-alanyl-tRNA(Ala) + AMP + diphosphate. Catalyzes the attachment of alanine to tRNA(Ala) in a two-step reaction: alanine is first activated by ATP to form Ala-AMP and then transferred to the acceptor end of tRNA(Ala). Also edits incorrectly charged Ser-tRNA(Ala) and Gly-tRNA(Ala) via its editing domain. The protein is Alanine--tRNA ligase of Orientia tsutsugamushi (strain Ikeda) (Rickettsia tsutsugamushi).